A 385-amino-acid polypeptide reads, in one-letter code: MTWPGGKDIVDQIFDAGYWLVSKSAVLGDEIKNHVEKSIESISEKMSNKETPRLQESNSNKFKAYKTLRIGFQDHWKLGLGISATSLCLYLGYRTFFKLPPYLPEAESQVVLILGDMNDPIIRNQVMDLYRRRFTVYICTENADVYKKHEEDQDFVYYIDPTCEEDFEAFFLDVPRLASILFMPRLSYHPSGAISCDSLESEIHSSILVYHQALLTIIPHLKRNTQLIMFNPSLTAELNLVHHSTEIIMSSIIDSLFRIFKNYRRLNVSMIKLGILQIGSQPSNYKFLTMAGSDIHEALHYPVYKMIMSANGYKLRQLLSWLTTWGGCNSVYHCGRFSYLISWPFASLIYNHRTRFSLKRLKKNLTKAYNSIISILPQSSSKSSK.

The protein belongs to the UPF0744 family.

The chain is UPF0744 protein YSD83 (YSD83) from Saccharomyces paradoxus (Yeast).